The primary structure comprises 164 residues: MANPLRKTMVYLGLADEELDYQQGQQPAQQQQSPVQAVPTPVPAPQQQAKRAPVTPLHKPSTTTRNAAPAEMNEILTVHPKAYKDAQVIAENFREGVPVIINLSQMTDDDARRLIDFASGLSIGLYGKIERVTAKVFLLSPSHVAVSGEQSATEAEVEASFFGR.

The disordered stretch occupies residues 21–71 (YQQGQQPAQQQQSPVQAVPTPVPAPQQQAKRAPVTPLHKPSTTTRNAAPAE). Residues 22-49 (QQGQQPAQQQQSPVQAVPTPVPAPQQQA) are compositionally biased toward low complexity.

The protein belongs to the SepF family. Homodimer. Interacts with FtsZ.

It is found in the cytoplasm. Its function is as follows. Cell division protein that is part of the divisome complex and is recruited early to the Z-ring. Probably stimulates Z-ring formation, perhaps through the cross-linking of FtsZ protofilaments. Its function overlaps with FtsA. The polypeptide is Cell division protein SepF (Clavibacter sepedonicus (Clavibacter michiganensis subsp. sepedonicus)).